Reading from the N-terminus, the 1195-residue chain is ATP-dependent DNA helicase Hel308 (1195 aa).

ATP-binding positions include glutamine 20 and 39 to 46 (IPTASGKT). The Helicase ATP-binding domain maps to 26–196 (RGLLDKNKNF…WLNAELIVDD (171 aa)). A DEAH box motif is present at residues 143 to 146 (DEIH). The DOD-type homing endonuclease domain occupies 451-584 (FIGYFIGDGY…LQFVLLRFGI (134 aa)).

This sequence belongs to the helicase family. Hel308 subfamily. In terms of assembly, monomer. Post-translationally, this protein undergoes a protein self splicing that involves a post-translational excision of the intervening region (intein) followed by peptide ligation.

It carries out the reaction Couples ATP hydrolysis with the unwinding of duplex DNA by translocating in the 3'-5' direction.. The catalysed reaction is ATP + H2O = ADP + phosphate + H(+). In terms of biological role, DNA-dependent ATPase and 3'-5' DNA helicase that may be involved in repair of stalled replication forks. In Methanocaldococcus jannaschii (strain ATCC 43067 / DSM 2661 / JAL-1 / JCM 10045 / NBRC 100440) (Methanococcus jannaschii), this protein is ATP-dependent DNA helicase Hel308.